An 816-amino-acid polypeptide reads, in one-letter code: Neuronal PAS domain-containing protein 2 (816 aa).

The span at 1–10 (MDEDEKDRAK) shows a compositional bias: basic and acidic residues. Positions 1–21 (MDEDEKDRAKRASRNKSEKKR) are disordered. The segment at 1-61 (MDEDEKDRAK…VIGFLQKHNE (61 aa)) is sufficient for heterodimer formation with BMAL1, E-box binding and for the effect of NADPH. The bHLH domain occupies 9–59 (AKRASRNKSEKKRRDQFNVLIKELSSMLPGNTRKMDKTTVLEKVIGFLQKH). In terms of domain architecture, PAS 1 spans 82–152 (NEEFTQLMLE…KILSSHMLVT (71 aa)). Heme b is bound by residues H119 and H171. The 71-residue stretch at 237–307 (FLKEMCVADE…RCHQHLMQFG (71 aa)) folds into the PAS 2 domain. In terms of domain architecture, PAC spans 311–354 (SCCYRFLTKGQQWIWLQTHYYITYHQWNSKPEFIVCTHSVVSYA). Disordered stretches follow at residues 364-431 (LALE…STPT), 610-639 (ISAQ…SQFS), 685-705 (QPMM…RTGR), and 742-816 (PSFP…LSES). The segment covering 400–413 (SGLPSSPSPSASSR) has biased composition (low complexity). The span at 420–431 (HTAMSEPTSTPT) shows a compositional bias: polar residues. Positions 623–639 (LLPASGRSLSSLPSQFS) are enriched in low complexity. A compositionally biased stretch (low complexity) spans 745 to 759 (PASRPSPLQPAQAQQ). Residues 780-789 (LLSTFSQQPG) show a composition bias toward polar residues. Basic residues predominate over residues 806 to 816 (PSRRVSRLSES).

As to quaternary structure, component of the circadian clock oscillator which includes the CRY proteins, CLOCK or NPAS2, BMAL1 or BMAL2, CSNK1D and/or CSNK1E, TIMELESS and the PER proteins. Efficient DNA binding requires dimerization with another bHLH protein. Interacts with NCOA3, KAT2B and CREBBP. Forms a heterodimer with BMAL1 and this heterodimerization is required for E-box-dependent transactivation. Interacts with EP300. Heme serves as cofactor. As to expression, expressed in the retinal ganglion cells (at protein level). Expressed in the hypothalamic suprachiasmatic nuclei (SCN) of the brain. Also found in spinal cord, and to a lesser extent in colon, small intestine and uterus. Exhibits a diurnal variation in its expression in the brain.

The protein resides in the nucleus. Its activity is regulated as follows. Carbon monoxide (CO) and the redox state of the cell can modulate the transcriptional activity of the NPAS2-BMAL1 heterodimer. NADH and NADPH enhance the DNA-binding activity of the heterodimer whereas CO binds the heme group in NPAS2 and inhibits the DNA-binding activity of the heterodimer. Functionally, transcriptional activator which forms a core component of the circadian clock. The circadian clock, an internal time-keeping system, regulates various physiological processes through the generation of approximately 24 hour circadian rhythms in gene expression, which are translated into rhythms in metabolism and behavior. It is derived from the Latin roots 'circa' (about) and 'diem' (day) and acts as an important regulator of a wide array of physiological functions including metabolism, sleep, body temperature, blood pressure, endocrine, immune, cardiovascular, and renal function. Consists of two major components: the central clock, residing in the suprachiasmatic nucleus (SCN) of the brain, and the peripheral clocks that are present in nearly every tissue and organ system. Both the central and peripheral clocks can be reset by environmental cues, also known as Zeitgebers (German for 'timegivers'). The predominant Zeitgeber for the central clock is light, which is sensed by retina and signals directly to the SCN. The central clock entrains the peripheral clocks through neuronal and hormonal signals, body temperature and feeding-related cues, aligning all clocks with the external light/dark cycle. Circadian rhythms allow an organism to achieve temporal homeostasis with its environment at the molecular level by regulating gene expression to create a peak of protein expression once every 24 hours to control when a particular physiological process is most active with respect to the solar day. Transcription and translation of core clock components (CLOCK, NPAS2, BMAL1, BMAL2, PER1, PER2, PER3, CRY1 and CRY2) plays a critical role in rhythm generation, whereas delays imposed by post-translational modifications (PTMs) are important for determining the period (tau) of the rhythms (tau refers to the period of a rhythm and is the length, in time, of one complete cycle). A diurnal rhythm is synchronized with the day/night cycle, while the ultradian and infradian rhythms have a period shorter and longer than 24 hours, respectively. Disruptions in the circadian rhythms contribute to the pathology of cardiovascular diseases, cancer, metabolic syndromes and aging. A transcription/translation feedback loop (TTFL) forms the core of the molecular circadian clock mechanism. Transcription factors, CLOCK or NPAS2 and BMAL1 or BMAL2, form the positive limb of the feedback loop, act in the form of a heterodimer and activate the transcription of core clock genes and clock-controlled genes (involved in key metabolic processes), harboring E-box elements (5'-CACGTG-3') within their promoters. The core clock genes: PER1/2/3 and CRY1/2 which are transcriptional repressors form the negative limb of the feedback loop and interact with the CLOCK|NPAS2-BMAL1|BMAL2 heterodimer inhibiting its activity and thereby negatively regulating their own expression. This heterodimer also activates nuclear receptors NR1D1/2 and RORA/B/G, which form a second feedback loop and which activate and repress BMAL1 transcription, respectively. The NPAS2-BMAL1 heterodimer positively regulates the expression of MAOA, F7 and LDHA and modulates the circadian rhythm of daytime contrast sensitivity by regulating the rhythmic expression of adenylate cyclase type 1 (ADCY1) in the retina. NPAS2 plays an important role in sleep homeostasis and in maintaining circadian behaviors in normal light/dark and feeding conditions and in the effective synchronization of feeding behavior with scheduled food availability. Regulates the gene transcription of key metabolic pathways in the liver and is involved in DNA damage response by regulating several cell cycle and DNA repair genes. Controls the circadian rhythm of NR0B2 expression by binding rhythmically to its promoter. Mediates the diurnal variation in the expression of GABARA1 receptor in the brain and contributes to the regulation of anxiety-like behaviors and GABAergic neurotransmission in the ventral striatum. This Mus musculus (Mouse) protein is Neuronal PAS domain-containing protein 2 (Npas2).